A 330-amino-acid chain; its full sequence is Chromatin modification-related protein EAF3 (330 aa).

Residues 5 to 62 (DGEKVLCFHGPLIYAAKILKAEKWTGEENVTGQVGPHYLVHYDGWKKTWDEWVPETRL) enclose the Tudor-knot domain. Positions 96–129 (TSAASSLKRAKDSELPDRKSASRGTKRSREHVEA) are disordered. Over residues 104–115 (RAKDSELPDRKS) the composition is skewed to basic and acidic residues. The MRG domain occupies 135–329 (KRPEVKISLP…ASPAYHRISS (195 aa)).

The protein belongs to the MRG family. Component of the NuA4 histone acetyltransferase complex.

It is found in the nucleus. Functionally, involved in deacetylation of histones, chromatin assembly and chromosome segregation. May act as a transcriptional oscillator, directing histone deacetylases to specific chromosomal domains. Component of the NuA4 histone acetyltransferase complex which is involved in transcriptional activation of selected genes principally by acetylation of nucleosomal histone H4 and H2A. The NuA4 complex is also involved in DNA repair. This Mycosarcoma maydis (Corn smut fungus) protein is Chromatin modification-related protein EAF3 (EAF3).